We begin with the raw amino-acid sequence, 113 residues long: Small ribosomal subunit protein bS6 (113 aa).

The protein belongs to the bacterial ribosomal protein bS6 family.

Functionally, binds together with bS18 to 16S ribosomal RNA. The protein is Small ribosomal subunit protein bS6 of Flavobacterium psychrophilum (strain ATCC 49511 / DSM 21280 / CIP 103535 / JIP02/86).